A 161-amino-acid polypeptide reads, in one-letter code: Regulator of ribonuclease activity A (161 aa).

This sequence belongs to the RraA family. In terms of assembly, homotrimer. Binds to both RNA-binding sites in the C-terminal region of Rne and to RhlB.

The protein resides in the cytoplasm. Globally modulates RNA abundance by binding to RNase E (Rne) and regulating its endonucleolytic activity. Can modulate Rne action in a substrate-dependent manner by altering the composition of the degradosome. Modulates RNA-binding and helicase activities of the degradosome. In Citrobacter koseri (strain ATCC BAA-895 / CDC 4225-83 / SGSC4696), this protein is Regulator of ribonuclease activity A.